Reading from the N-terminus, the 491-residue chain is Polybrominated aromatic compounds synthase (491 aa).

Position 437 (C437) interacts with heme.

This sequence belongs to the cytochrome P450 family. It depends on heme as a cofactor.

Cytochrome P450 protein involved in the biosynthesis of polybrominated aromatic organic compounds. In the presence of ferredoxin, ferredoxin reductase and NADH, catalyzes the coupling of bromophenols and bromopyrroles, forming various polybrominated biphenyls and hydroxylated polybrominated diphenyl ethers (OH-BDE). Can also mediate the heterocoupling of 3,5-dibromocatechol. Can also use chlorinated phenolic substrates. 2,3,4-tribromopyrrole could be the physiological substrate. The polypeptide is Polybrominated aromatic compounds synthase (Pseudoalteromonas luteoviolacea (strain 2ta16)).